A 285-amino-acid polypeptide reads, in one-letter code: NAD kinase (285 aa).

D64 acts as the Proton acceptor in catalysis. NAD(+)-binding positions include 64 to 65, 140 to 141, R151, R168, D170, and 181 to 186; these read DG, ND, and TGYNLS.

It belongs to the NAD kinase family. Requires a divalent metal cation as cofactor.

It localises to the cytoplasm. It catalyses the reaction NAD(+) + ATP = ADP + NADP(+) + H(+). Involved in the regulation of the intracellular balance of NAD and NADP, and is a key enzyme in the biosynthesis of NADP. Catalyzes specifically the phosphorylation on 2'-hydroxyl of the adenosine moiety of NAD to yield NADP. The sequence is that of NAD kinase from Lachnoclostridium phytofermentans (strain ATCC 700394 / DSM 18823 / ISDg) (Clostridium phytofermentans).